Consider the following 342-residue polypeptide: Holliday junction branch migration complex subunit RuvB (342 aa).

A large ATPase domain (RuvB-L) region spans residues 1–179; the sequence is MTNILSPEKS…FGIPMRLNFY (179 aa). Residues isoleucine 18, arginine 19, glycine 60, lysine 63, threonine 64, threonine 65, 126-128, arginine 169, tyrosine 179, and arginine 216 contribute to the ATP site; that span reads EDF. Threonine 64 provides a ligand contact to Mg(2+). A small ATPAse domain (RuvB-S) region spans residues 180–250; sequence NTEELKQVLN…ICDFGLKRLT (71 aa). Residues 253–342 are head domain (RuvB-H); it reads SIGLDSNDYR…NQLNILNENE (90 aa). DNA contacts are provided by arginine 289, arginine 308, and arginine 313.

This sequence belongs to the RuvB family. Homohexamer. Forms an RuvA(8)-RuvB(12)-Holliday junction (HJ) complex. HJ DNA is sandwiched between 2 RuvA tetramers; dsDNA enters through RuvA and exits via RuvB. An RuvB hexamer assembles on each DNA strand where it exits the tetramer. Each RuvB hexamer is contacted by two RuvA subunits (via domain III) on 2 adjacent RuvB subunits; this complex drives branch migration. In the full resolvosome a probable DNA-RuvA(4)-RuvB(12)-RuvC(2) complex forms which resolves the HJ.

The protein localises to the cytoplasm. It catalyses the reaction ATP + H2O = ADP + phosphate + H(+). In terms of biological role, participates in UV-tolerance of Synechocystis PCC 6803. Functionally, the RuvA-RuvB-RuvC complex processes Holliday junction (HJ) DNA during genetic recombination and DNA repair, while the RuvA-RuvB complex plays an important role in the rescue of blocked DNA replication forks via replication fork reversal (RFR). RuvA specifically binds to HJ cruciform DNA, conferring on it an open structure. The RuvB hexamer acts as an ATP-dependent pump, pulling dsDNA into and through the RuvAB complex. RuvB forms 2 homohexamers on either side of HJ DNA bound by 1 or 2 RuvA tetramers; 4 subunits per hexamer contact DNA at a time. Coordinated motions by a converter formed by DNA-disengaged RuvB subunits stimulates ATP hydrolysis and nucleotide exchange. Immobilization of the converter enables RuvB to convert the ATP-contained energy into a lever motion, pulling 2 nucleotides of DNA out of the RuvA tetramer per ATP hydrolyzed, thus driving DNA branch migration. The RuvB motors rotate together with the DNA substrate, which together with the progressing nucleotide cycle form the mechanistic basis for DNA recombination by continuous HJ branch migration. Branch migration allows RuvC to scan DNA until it finds its consensus sequence, where it cleaves and resolves cruciform DNA. The polypeptide is Holliday junction branch migration complex subunit RuvB (Rickettsia prowazekii (strain Madrid E)).